We begin with the raw amino-acid sequence, 194 residues long: N-acetyltransferase (194 aa).

Residues 9–173 (PQVRPGIAED…GRYWDVRWYE (165 aa)) form the N-acetyltransferase domain.

The protein belongs to the acetyltransferase family. PAT/BAR subfamily.

The protein is N-acetyltransferase (nat) of Streptomyces griseus.